Here is a 235-residue protein sequence, read N- to C-terminus: 7-cyano-7-deazaguanine synthase (235 aa).

9–19 (FSGGQDSTTCL) contributes to the ATP binding site. Zn(2+) contacts are provided by Cys197, Cys212, Cys215, and Cys218.

The protein belongs to the QueC family. It depends on Zn(2+) as a cofactor.

The catalysed reaction is 7-carboxy-7-deazaguanine + NH4(+) + ATP = 7-cyano-7-deazaguanine + ADP + phosphate + H2O + H(+). The protein operates within purine metabolism; 7-cyano-7-deazaguanine biosynthesis. Catalyzes the ATP-dependent conversion of 7-carboxy-7-deazaguanine (CDG) to 7-cyano-7-deazaguanine (preQ(0)). In Polaromonas sp. (strain JS666 / ATCC BAA-500), this protein is 7-cyano-7-deazaguanine synthase.